Here is a 125-residue protein sequence, read N- to C-terminus: Ribosome-binding factor A (125 aa).

It belongs to the RbfA family. In terms of assembly, monomer. Binds 30S ribosomal subunits, but not 50S ribosomal subunits or 70S ribosomes.

It is found in the cytoplasm. Functionally, one of several proteins that assist in the late maturation steps of the functional core of the 30S ribosomal subunit. Associates with free 30S ribosomal subunits (but not with 30S subunits that are part of 70S ribosomes or polysomes). Required for efficient processing of 16S rRNA. May interact with the 5'-terminal helix region of 16S rRNA. This is Ribosome-binding factor A from Kosmotoga olearia (strain ATCC BAA-1733 / DSM 21960 / TBF 19.5.1).